The sequence spans 243 residues: Voltage-gated monoatomic cation channel TMEM109 (243 aa).

A signal peptide spans 1–33 (MAASSISSPWGKHVFKAILMVLVALILLHSALA). The Lumenal segment spans residues 34–83 (QSRRDFAPPGQQKREAPVDVLTQIGRSVRGTLDAWIGPETMHLVSESSSQ). Residues 84 to 104 (VLWAISSAISVAFFALSGIAA) form a helical membrane-spanning segment. At 105–135 (QLLNALGLAGDYLAQGLKLSPGQVQTFLLWG) the chain is on the cytoplasmic side. Residues 136 to 156 (AGALVVYWLLSLLLGLVLALL) form a helical membrane-spanning segment. The Lumenal portion of the chain corresponds to 157–185 (GRILWGLKLVIFLAGFVALMRSVPDPSTR). A helical membrane pass occupies residues 186-205 (ALLLLALLILYALLSRLTGS). Residues 206 to 243 (RASGAQLEAKVRGLERQVEELRWRQRRAAKGARSVEEE) lie on the Cytoplasmic side of the membrane.

Homooligomer. Interacts with CRYAB; in the cellular response to DNA damage.

Its subcellular location is the nucleus outer membrane. It localises to the endoplasmic reticulum membrane. The protein resides in the sarcoplasmic reticulum membrane. It catalyses the reaction K(+)(in) = K(+)(out). The enzyme catalyses Ca(2+)(in) = Ca(2+)(out). Functions as a voltage-gated monoatomic cation channel permeable to both potassium and calcium. Plays a role in the cellular response to DNA damage. The sequence is that of Voltage-gated monoatomic cation channel TMEM109 from Homo sapiens (Human).